We begin with the raw amino-acid sequence, 167 residues long: MFPMVTGFMNYGHQTVRAARYIGQGFMITLSHANRLPVTIQYPYEKLITSERFRGRIHFEFDKCIACEVCVRVCPIDLPVVDWKFETDIRKKRLLNYSIDFGICIFCGNCVEYCPTNCLSMTEEYELSTYDRHELNYNQIALGRLPMSVIDDYTIRTVLNSIQRKTQ.

2 4Fe-4S ferredoxin-type domains span residues 55–84 (GRIH…VDWK) and 95–124 (LNYS…MTEE). 8 residues coordinate [4Fe-4S] cluster: C64, C67, C70, C74, C104, C107, C110, and C114.

Belongs to the complex I 23 kDa subunit family. As to quaternary structure, NDH is composed of at least 16 different subunits, 5 of which are encoded in the nucleus. It depends on [4Fe-4S] cluster as a cofactor.

Its subcellular location is the plastid. The protein resides in the chloroplast thylakoid membrane. The catalysed reaction is a plastoquinone + NADH + (n+1) H(+)(in) = a plastoquinol + NAD(+) + n H(+)(out). It catalyses the reaction a plastoquinone + NADPH + (n+1) H(+)(in) = a plastoquinol + NADP(+) + n H(+)(out). In terms of biological role, NDH shuttles electrons from NAD(P)H:plastoquinone, via FMN and iron-sulfur (Fe-S) centers, to quinones in the photosynthetic chain and possibly in a chloroplast respiratory chain. The immediate electron acceptor for the enzyme in this species is believed to be plastoquinone. Couples the redox reaction to proton translocation, and thus conserves the redox energy in a proton gradient. This Gossypium barbadense (Sea Island cotton) protein is NAD(P)H-quinone oxidoreductase subunit I, chloroplastic.